The following is a 630-amino-acid chain: DELLA protein DWARF8 (630 aa).

The tract at residues 1-35 (MKREYQDAGGSGGDMGSSKDKMMAAAAGAGEQEEE) is disordered. The DELLA motif signature appears at 38-42 (DELLA). The disordered stretch occupies residues 161–222 (PIPSPVAAPS…AAPPATQASA (62 aa)). Low complexity-rich tracts occupy residues 165–176 (PVAAPSADPSTD) and 191–222 (TSSS…QASA). Residues 234-623 (VDTQEAGIRL…RPLIATSAWR (390 aa)) form the GRAS domain. The interval 241–297 (IRLVHALLACAEAVQQENFSAAEALVKQIPMLASSQGGAMRKVAAYFGEALARRVYR) is leucine repeat I (LRI). The LxCxE motif motif lies at 248 to 252 (LACAE). The segment at 316–381 (HAHFYESCPY…GGPPSFRLTG (66 aa)) is VHIID. The short motif at 347–351 (VHVVD) is the VHIID element. Residues 395–427 (QVGWKLAQFAHTIRVDFQYRGLVAATLADLEPF) are leucine repeat II (LRII). Residues 443 to 544 (IAVNSVFELH…EVYLGRQICN (102 aa)) form a PFYRE region. The LXXLL motif motif lies at 451–455 (LHRLL). The tract at residues 547–623 (ACEGAERTER…RPLIATSAWR (77 aa)) is SAW.

This sequence belongs to the GRAS family. DELLA subfamily. Post-translationally, phosphorylated. Ubiquitinated. Upon GA application it is ubiquitinated, leading to its subsequent degradation.

It is found in the nucleus. Its function is as follows. Probable transcriptional regulator that acts as a repressor of the gibberellin (GA) signaling pathway. Probably acts by participating in large multiprotein complexes that repress transcription of GA-inducible genes. Upon GA application, it is degraded by the proteasome, allowing the GA signaling pathway. This is DELLA protein DWARF8 (D8) from Zea mays (Maize).